We begin with the raw amino-acid sequence, 351 residues long: Mitogen-activated protein kinase 2 (351 aa).

Residues 16 to 304 (YEILDVIGEG…AEEALQHNYL (289 aa)) form the Protein kinase domain. ATP contacts are provided by residues 22–30 (IGEGAYGIV) and lysine 45. Aspartate 140 (proton acceptor) is an active-site residue. Residue threonine 176 is modified to Phosphothreonine. The short motif at 176 to 178 (TEY) is the TXY element. Tyrosine 178 carries the post-translational modification Phosphotyrosine.

It belongs to the protein kinase superfamily. CMGC Ser/Thr protein kinase family. MAP kinase subfamily. Mg(2+) is required as a cofactor. The cofactor is Mn(2+). Post-translationally, dually phosphorylated on Thr-176 and Tyr-178, which activates the enzyme.

It localises to the nucleus. It carries out the reaction L-seryl-[protein] + ATP = O-phospho-L-seryl-[protein] + ADP + H(+). The catalysed reaction is L-threonyl-[protein] + ATP = O-phospho-L-threonyl-[protein] + ADP + H(+). Its activity is regulated as follows. Activated by tyrosine and threonine phosphorylation. Inhibited by the MEK inhibitor U0126 but not by the p38 inhibitor SB203580. Cobalt abolishes kinase activity, while calcium, copper and nickel have little effect on kinase activity. Its function is as follows. Serine-threonine protein kinase which may be involved in pheromone signaling. Functionally complements the MAPK pheromone signaling pathway in S.cerevisiae. The protein is Mitogen-activated protein kinase 2 of Pneumocystis carinii.